Reading from the N-terminus, the 127-residue chain is Small ribosomal subunit protein uS12 (127 aa).

Asp89 is modified (3-methylthioaspartic acid).

Belongs to the universal ribosomal protein uS12 family. In terms of assembly, part of the 30S ribosomal subunit. Contacts proteins S8 and S17. May interact with IF1 in the 30S initiation complex.

Functionally, with S4 and S5 plays an important role in translational accuracy. In terms of biological role, interacts with and stabilizes bases of the 16S rRNA that are involved in tRNA selection in the A site and with the mRNA backbone. Located at the interface of the 30S and 50S subunits, it traverses the body of the 30S subunit contacting proteins on the other side and probably holding the rRNA structure together. The combined cluster of proteins S8, S12 and S17 appears to hold together the shoulder and platform of the 30S subunit. In Campylobacter fetus subsp. fetus (strain 82-40), this protein is Small ribosomal subunit protein uS12.